We begin with the raw amino-acid sequence, 83 residues long: Cytochrome b559 subunit alpha (83 aa).

The chain crosses the membrane as a helical span at residues 21–35; it reads VIHSITIPSLFIAGW. H23 lines the heme pocket.

The protein belongs to the PsbE/PsbF family. Heterodimer of an alpha subunit and a beta subunit. PSII is composed of 1 copy each of membrane proteins PsbA, PsbB, PsbC, PsbD, PsbE, PsbF, PsbH, PsbI, PsbJ, PsbK, PsbL, PsbM, PsbT, PsbX, PsbY, PsbZ, Psb30/Ycf12, at least 3 peripheral proteins of the oxygen-evolving complex and a large number of cofactors. It forms dimeric complexes. Heme b is required as a cofactor.

It is found in the plastid. The protein localises to the chloroplast thylakoid membrane. Functionally, this b-type cytochrome is tightly associated with the reaction center of photosystem II (PSII). PSII is a light-driven water:plastoquinone oxidoreductase that uses light energy to abstract electrons from H(2)O, generating O(2) and a proton gradient subsequently used for ATP formation. It consists of a core antenna complex that captures photons, and an electron transfer chain that converts photonic excitation into a charge separation. In Chara vulgaris (Common stonewort), this protein is Cytochrome b559 subunit alpha.